Reading from the N-terminus, the 131-residue chain is Small ribosomal subunit protein uS8 (131 aa).

It belongs to the universal ribosomal protein uS8 family. As to quaternary structure, part of the 30S ribosomal subunit. Contacts proteins S5 and S12.

Functionally, one of the primary rRNA binding proteins, it binds directly to 16S rRNA central domain where it helps coordinate assembly of the platform of the 30S subunit. In Phocaeicola vulgatus (strain ATCC 8482 / DSM 1447 / JCM 5826 / CCUG 4940 / NBRC 14291 / NCTC 11154) (Bacteroides vulgatus), this protein is Small ribosomal subunit protein uS8.